Consider the following 796-residue polypeptide: Protein translocase subunit SecA 2 (796 aa).

ATP-binding positions include Q84, 102-106 (GEGKT), and D496.

Belongs to the SecA family. As to quaternary structure, monomer and homodimer (Potential). Part of the accessory SecA2/SecY2 protein translocation apparatus required to export cell wall protein SraP.

It is found in the cell membrane. The protein localises to the cytoplasm. It catalyses the reaction ATP + H2O + cellular proteinSide 1 = ADP + phosphate + cellular proteinSide 2.. Functionally, part of the accessory SecA2/SecY2 system specifically required to export SraP, a serine-rich repeat cell wall protein encoded upstream in the same operon. The sequence is that of Protein translocase subunit SecA 2 from Staphylococcus aureus (strain NCTC 8325 / PS 47).